Consider the following 105-residue polypeptide: Large ribosomal subunit protein uL24 (105 aa).

The protein belongs to the universal ribosomal protein uL24 family. In terms of assembly, part of the 50S ribosomal subunit.

Functionally, one of two assembly initiator proteins, it binds directly to the 5'-end of the 23S rRNA, where it nucleates assembly of the 50S subunit. Its function is as follows. One of the proteins that surrounds the polypeptide exit tunnel on the outside of the subunit. The chain is Large ribosomal subunit protein uL24 from Mycobacterium avium (strain 104).